Reading from the N-terminus, the 261-residue chain is Cytochrome c oxidase subunit 3 (261 aa).

At 1–15 the chain is on the mitochondrial matrix side; the sequence is MAHQAHAYHMVDPSP. A helical transmembrane segment spans residues 16–34; sequence WPLTGAIAALLMTSGLAIW. Over 35–40 the chain is Mitochondrial intermembrane; that stretch reads FHFHST. The helical transmembrane segment at 41 to 66 threads the bilayer; it reads TLMTLGLILLLLTMYQWWRDIIREGT. Over 67 to 72 the chain is Mitochondrial matrix; the sequence is FQGHHT. Residues 73–105 traverse the membrane as a helical segment; that stretch reads PPVQKGLRYGMILFITSEVFFFLGFFWAFYHSS. At 106-128 the chain is on the mitochondrial intermembrane side; the sequence is LAPTPELGGCWPPTGITPLDPFE. The helical transmembrane segment at 129–152 threads the bilayer; sequence VPLLNTAVLLASGVTVTWAHHSIM. Residues 153–155 lie on the Mitochondrial matrix side of the membrane; it reads EGE. The helical transmembrane segment at 156–183 threads the bilayer; it reads RKQAIQSLALTILLGLYFTALQAMEYYE. At 184-190 the chain is on the mitochondrial intermembrane side; the sequence is APFTIAD. A helical membrane pass occupies residues 191–223; it reads GVYGSTFFVATGFHGLHVIIGSTFLAVCLLRQI. Topologically, residues 224–232 are mitochondrial matrix; the sequence is QYHFTSEHH. Residues 233 to 256 traverse the membrane as a helical segment; sequence FGFEAAAWYWHFVDVVWLFLYVSI. Over 257-261 the chain is Mitochondrial intermembrane; the sequence is YWWGS.

It belongs to the cytochrome c oxidase subunit 3 family. Component of the cytochrome c oxidase (complex IV, CIV), a multisubunit enzyme composed of 14 subunits. The complex is composed of a catalytic core of 3 subunits MT-CO1, MT-CO2 and MT-CO3, encoded in the mitochondrial DNA, and 11 supernumerary subunits COX4I, COX5A, COX5B, COX6A, COX6B, COX6C, COX7A, COX7B, COX7C, COX8 and NDUFA4, which are encoded in the nuclear genome. The complex exists as a monomer or a dimer and forms supercomplexes (SCs) in the inner mitochondrial membrane with NADH-ubiquinone oxidoreductase (complex I, CI) and ubiquinol-cytochrome c oxidoreductase (cytochrome b-c1 complex, complex III, CIII), resulting in different assemblies (supercomplex SCI(1)III(2)IV(1) and megacomplex MCI(2)III(2)IV(2)).

The protein resides in the mitochondrion inner membrane. It catalyses the reaction 4 Fe(II)-[cytochrome c] + O2 + 8 H(+)(in) = 4 Fe(III)-[cytochrome c] + 2 H2O + 4 H(+)(out). Component of the cytochrome c oxidase, the last enzyme in the mitochondrial electron transport chain which drives oxidative phosphorylation. The respiratory chain contains 3 multisubunit complexes succinate dehydrogenase (complex II, CII), ubiquinol-cytochrome c oxidoreductase (cytochrome b-c1 complex, complex III, CIII) and cytochrome c oxidase (complex IV, CIV), that cooperate to transfer electrons derived from NADH and succinate to molecular oxygen, creating an electrochemical gradient over the inner membrane that drives transmembrane transport and the ATP synthase. Cytochrome c oxidase is the component of the respiratory chain that catalyzes the reduction of oxygen to water. Electrons originating from reduced cytochrome c in the intermembrane space (IMS) are transferred via the dinuclear copper A center (CU(A)) of subunit 2 and heme A of subunit 1 to the active site in subunit 1, a binuclear center (BNC) formed by heme A3 and copper B (CU(B)). The BNC reduces molecular oxygen to 2 water molecules using 4 electrons from cytochrome c in the IMS and 4 protons from the mitochondrial matrix. This chain is Cytochrome c oxidase subunit 3 (mt-co3), found in Cyprinus carpio (Common carp).